The chain runs to 636 residues: Threonine--tRNA ligase (636 aa).

The TGS domain maps to 1-61; it reads MINITLPDDS…RNDCAVRLIT (61 aa). The segment at 238–528 is catalytic; it reads DHRKIGTRMG…LVEHFAGKFP (291 aa). The Zn(2+) site is built by C329, H380, and H505.

The protein belongs to the class-II aminoacyl-tRNA synthetase family. Homodimer. Zn(2+) is required as a cofactor.

It localises to the cytoplasm. The enzyme catalyses tRNA(Thr) + L-threonine + ATP = L-threonyl-tRNA(Thr) + AMP + diphosphate + H(+). Functionally, catalyzes the attachment of threonine to tRNA(Thr) in a two-step reaction: L-threonine is first activated by ATP to form Thr-AMP and then transferred to the acceptor end of tRNA(Thr). Also edits incorrectly charged L-seryl-tRNA(Thr). In Desulforapulum autotrophicum (strain ATCC 43914 / DSM 3382 / VKM B-1955 / HRM2) (Desulfobacterium autotrophicum), this protein is Threonine--tRNA ligase.